We begin with the raw amino-acid sequence, 170 residues long: Tachykinin-4 (170 aa).

Positions 1 to 16 (MLPLLALFLLIGPAVS) are cleaved as a signal peptide. Positions 17–54 (TTTRDREDLTFGAEAESWVTVNLKGIPVPSIELKLQEL) are excised as a propeptide. Position 66 is a methionine amide (M66). Residues 67-170 (GKRVEGVHPI…SQMMPRPSRP (104 aa)) constitute a propeptide that is removed on maturation. Positions 107 to 170 (QETNHQSAGP…SQMMPRPSRP (64 aa)) are disordered. A compositionally biased stretch (polar residues) spans 123-140 (SLQSQRGRSEPPNHQQHV).

This sequence belongs to the tachykinin family.

Its subcellular location is the secreted. Its function is as follows. Tachykinins are active peptides which excite neurons, evoke behavioral responses, are potent vasodilators and secretagogues, and contract (directly or indirectly) many smooth muscles. Hemokinin induces plasma extravasation, mast cell degranulation, muscle contraction, salivary secretion and scratching behavior. Increases sperm motility. Induces potent analgesic effects and may play a role in pain modulation. Promotes survival of bone marrow B lineage cells and of cultured LPS-stimulated pre-B cells and may act as an autocrine factor required for B-cell survival and proliferation. Lowers systemic arterial pressure following intravenous injection. Induces interferon-gamma production and may play a role in the inflammatory response. Shows potent affinity and specificity for the NK-1 receptor. This Rattus norvegicus (Rat) protein is Tachykinin-4.